A 353-amino-acid polypeptide reads, in one-letter code: Biotin synthase (353 aa).

Residues 51–270 form the Radical SAM core domain; sequence NEVQCNQLLN…IALARIMMPK (220 aa). [4Fe-4S] cluster contacts are provided by cysteine 66, cysteine 70, and cysteine 73. Residues cysteine 110, cysteine 141, cysteine 201, and arginine 274 each coordinate [2Fe-2S] cluster. A disordered region spans residues 330 to 353; sequence APVEAHSHDHDHDHHDHHHGHSHS. Positions 334-343 are enriched in basic and acidic residues; sequence AHSHDHDHDH. Basic residues predominate over residues 344–353; that stretch reads HDHHHGHSHS.

The protein belongs to the radical SAM superfamily. Biotin synthase family. Homodimer. The cofactor is [4Fe-4S] cluster. [2Fe-2S] cluster is required as a cofactor.

It carries out the reaction (4R,5S)-dethiobiotin + (sulfur carrier)-SH + 2 reduced [2Fe-2S]-[ferredoxin] + 2 S-adenosyl-L-methionine = (sulfur carrier)-H + biotin + 2 5'-deoxyadenosine + 2 L-methionine + 2 oxidized [2Fe-2S]-[ferredoxin]. It functions in the pathway cofactor biosynthesis; biotin biosynthesis; biotin from 7,8-diaminononanoate: step 2/2. Catalyzes the conversion of dethiobiotin (DTB) to biotin by the insertion of a sulfur atom into dethiobiotin via a radical-based mechanism. The protein is Biotin synthase of Rhodopseudomonas palustris (strain HaA2).